A 215-amino-acid chain; its full sequence is Large ribosomal subunit protein uL4 (215 aa).

Residues 46–76 (TAKSKNRAEVSGGGRKPWAQKGGGRARAGSI) are disordered. A compositionally biased stretch (gly residues) spans 56 to 71 (SGGGRKPWAQKGGGRA).

It belongs to the universal ribosomal protein uL4 family. As to quaternary structure, part of the 50S ribosomal subunit.

One of the primary rRNA binding proteins, this protein initially binds near the 5'-end of the 23S rRNA. It is important during the early stages of 50S assembly. It makes multiple contacts with different domains of the 23S rRNA in the assembled 50S subunit and ribosome. In terms of biological role, forms part of the polypeptide exit tunnel. This Helicobacter acinonychis (strain Sheeba) protein is Large ribosomal subunit protein uL4.